Consider the following 99-residue polypeptide: Protein Frey (99 aa).

The chain crosses the membrane as a helical span at residues alanine 13–leucine 29. The tract at residues arginine 64–methionine 90 is disordered.

Interacts with SPPL2C (via active sites); the interaction stabilizes FREY1 protein and inhibits SPPL2C proteolytic activity. Interacts with IZUMO1; the interaction retains IZUMO1 at the endoplasmic reticulum membrane and coordinates IZUMO1 complex assembly.

The protein localises to the endoplasmic reticulum membrane. Its function is as follows. Key regulator for male fertility expressed transiently in round spermatids where it recruits IZUMO1 at the endoplasmic reticulum (ER) membrane and coordinates the oolemmal binding multimeric complex (IZUMO1 complex) assembly. Upon complete assembly of the IZUMO1 complex, its ER retention is released, facilitating IZUMO1 complex export to the acrosome. Through the interaction with SPPL2C, inhibits its intramembrane protease activity directly accessing the catalytic center of an I-CLiP. The polypeptide is Protein Frey (FREY1) (Bos taurus (Bovine)).